The primary structure comprises 298 residues: Tyrosine recombinase XerC (298 aa).

The Core-binding (CB) domain occupies 1–84; it reads MNHIQEAFLN…TLRTFYEYWM (84 aa). Residues 105 to 286 form the Tyr recombinase domain; it reads YLPQFFYEEE…SNQQLRKVYL (182 aa). Residues Arg-145, Lys-169, His-238, Arg-241, and His-264 contribute to the active site. Residue Tyr-273 is the O-(3'-phospho-DNA)-tyrosine intermediate of the active site.

It belongs to the 'phage' integrase family. XerC subfamily. In terms of assembly, forms a cyclic heterotetrameric complex composed of two molecules of XerC and two molecules of XerD.

The protein resides in the cytoplasm. Its function is as follows. Site-specific tyrosine recombinase, which acts by catalyzing the cutting and rejoining of the recombining DNA molecules. The XerC-XerD complex is essential to convert dimers of the bacterial chromosome into monomers to permit their segregation at cell division. It also contributes to the segregational stability of plasmids. The protein is Tyrosine recombinase XerC of Staphylococcus aureus (strain Mu3 / ATCC 700698).